Here is a 485-residue protein sequence, read N- to C-terminus: Glutamyl-tRNA(Gln) amidotransferase subunit A (485 aa).

Residues Lys-80 and Ser-155 each act as charge relay system in the active site. Residue Ser-179 is the Acyl-ester intermediate of the active site.

This sequence belongs to the amidase family. GatA subfamily. Heterotrimer of A, B and C subunits.

It catalyses the reaction L-glutamyl-tRNA(Gln) + L-glutamine + ATP + H2O = L-glutaminyl-tRNA(Gln) + L-glutamate + ADP + phosphate + H(+). In terms of biological role, allows the formation of correctly charged Gln-tRNA(Gln) through the transamidation of misacylated Glu-tRNA(Gln) in organisms which lack glutaminyl-tRNA synthetase. The reaction takes place in the presence of glutamine and ATP through an activated gamma-phospho-Glu-tRNA(Gln). The protein is Glutamyl-tRNA(Gln) amidotransferase subunit A of Endomicrobium trichonymphae.